An 89-amino-acid chain; its full sequence is Small ribosomal subunit protein uS15 (89 aa).

The protein belongs to the universal ribosomal protein uS15 family. In terms of assembly, part of the 30S ribosomal subunit. Forms a bridge to the 50S subunit in the 70S ribosome, contacting the 23S rRNA.

In terms of biological role, one of the primary rRNA binding proteins, it binds directly to 16S rRNA where it helps nucleate assembly of the platform of the 30S subunit by binding and bridging several RNA helices of the 16S rRNA. Its function is as follows. Forms an intersubunit bridge (bridge B4) with the 23S rRNA of the 50S subunit in the ribosome. The protein is Small ribosomal subunit protein uS15 of Levilactobacillus brevis (strain ATCC 367 / BCRC 12310 / CIP 105137 / JCM 1170 / LMG 11437 / NCIMB 947 / NCTC 947) (Lactobacillus brevis).